A 330-amino-acid chain; its full sequence is DNA-directed RNA polymerase subunit alpha (330 aa).

Residues 1–231 form an alpha N-terminal domain (alpha-NTD) region; the sequence is MAILAFQKPD…IYHFMLFSDE (231 aa). The segment at 253–330 is alpha C-terminal domain (alpha-CTD); sequence MRQLLKTKLV…DISKYKLDKE (78 aa).

The protein belongs to the RNA polymerase alpha chain family. Homodimer. The RNAP catalytic core consists of 2 alpha, 1 beta, 1 beta' and 1 omega subunit. When a sigma factor is associated with the core the holoenzyme is formed, which can initiate transcription.

It catalyses the reaction RNA(n) + a ribonucleoside 5'-triphosphate = RNA(n+1) + diphosphate. Its function is as follows. DNA-dependent RNA polymerase catalyzes the transcription of DNA into RNA using the four ribonucleoside triphosphates as substrates. The polypeptide is DNA-directed RNA polymerase subunit alpha (Phocaeicola vulgatus (strain ATCC 8482 / DSM 1447 / JCM 5826 / CCUG 4940 / NBRC 14291 / NCTC 11154) (Bacteroides vulgatus)).